The primary structure comprises 157 residues: Transcriptional repressor NrdR (157 aa).

Residues 3–34 fold into a zinc finger; that stretch reads CPFCNTVDTKVIDSRLVSEGSQIKRRRQCAIC. The region spanning 49-139 is the ATP-cone domain; that stretch reads PRVIKNDDLL…VYRSFEDVRE (91 aa).

It belongs to the NrdR family. Zn(2+) is required as a cofactor.

In terms of biological role, negatively regulates transcription of bacterial ribonucleotide reductase nrd genes and operons by binding to NrdR-boxes. In Hamiltonella defensa subsp. Acyrthosiphon pisum (strain 5AT), this protein is Transcriptional repressor NrdR.